A 177-amino-acid chain; its full sequence is Peptide deformylase (177 aa).

Cysteine 98 and histidine 140 together coordinate Fe cation. The active site involves glutamate 141. A Fe cation-binding site is contributed by histidine 144.

This sequence belongs to the polypeptide deformylase family. Fe(2+) is required as a cofactor.

It catalyses the reaction N-terminal N-formyl-L-methionyl-[peptide] + H2O = N-terminal L-methionyl-[peptide] + formate. Removes the formyl group from the N-terminal Met of newly synthesized proteins. Requires at least a dipeptide for an efficient rate of reaction. N-terminal L-methionine is a prerequisite for activity but the enzyme has broad specificity at other positions. The sequence is that of Peptide deformylase from Zymomonas mobilis subsp. mobilis (strain ATCC 31821 / ZM4 / CP4).